Consider the following 726-residue polypeptide: MSTTDDTHNTLSTGKCPFHQGGHDRSAGAGTASRDWWPNQLRVDLLNQHSNRSNPLGEDFDYRKEFSKLDYSALKGDLKALLTDSQPWWPADWGSYVGLFIRMAWHGAGTYRSIDGRGGAGRGQQRFAPLNSWPDNVSLDKARRLLWPIKQKYGQKISWADLFILAGNVALENSGFRTFGFGAGREDVWEPDLDVNWGDEKAWLTHRHPEALAKAPLGATEMGLIYVNPEGPDHSGEPLSAAAAIRATFGNMGMNDEETVALIAGGHTLGKTHGAAAASHVGADPEAAPIEAQGLGWASSYGSGVGADAITSGLEVVWTQTPTQWSNYFFENLFKYEWVQTRSPAGAIQFEAVDAPDIIPDPFDPSKKRKPTMLVTDLTLRFDPEFEKISRRFLNDPQAFNEAFARAWFKLTHRDMGPKARYIGPEVPKEDLIWQDPLPQPLYQPTQEDIINLKAAIAASGLSISEMVSVAWASASTFRGGDKRGGANGARLALAPQRDWEVNAVAARVLPVLEALQKTTNKASLADIIVLAGVVGIEQAAAAAGVSISVPFAPGRVDARQDQTDIEMFSLLEPIADGFRNYRARLDVSTTESLLIDKAQQLTLTAPEMTVLVGGMRVLGTNFDGSQNGVFTDRPGVLSTDFFANLLDMRYEWKPTDESNELFEGRDRLTGEVKYTATRADLVFGSNSVLRALAEVYACSDAHEKFVKDFVAAWVKVMNLDRFDLQ.

Residues 1–33 (MSTTDDTHNTLSTGKCPFHQGGHDRSAGAGTAS) are disordered. The tryptophyl-tyrosyl-methioninium (Trp-Tyr) (with M-252) cross-link spans 105–226 (WHGAGTYRSI…LGATEMGLIY (122 aa)). Catalysis depends on H106, which acts as the Proton acceptor. The segment at residues 226-252 (YVNPEGPDHSGEPLSAAAAIRATFGNM) is a cross-link (tryptophyl-tyrosyl-methioninium (Tyr-Met) (with W-105)). Residue H267 participates in heme b binding.

It belongs to the peroxidase family. Peroxidase/catalase subfamily. As to quaternary structure, homodimer or homotetramer. The cofactor is heme b. Post-translationally, formation of the three residue Trp-Tyr-Met cross-link is important for the catalase, but not the peroxidase activity of the enzyme.

It carries out the reaction H2O2 + AH2 = A + 2 H2O. It catalyses the reaction 2 H2O2 = O2 + 2 H2O. Bifunctional enzyme with both catalase and broad-spectrum peroxidase activity. This Salmonella choleraesuis (strain SC-B67) protein is Catalase-peroxidase.